The primary structure comprises 117 residues: Synaptobrevin homolog 1 (117 aa).

The tract at residues 1–30 is disordered; it reads MSSSTPFDPYALSEHDEERPQNVQSKSRTA. Topologically, residues 1–94 are cytoplasmic; that stretch reads MSSSTPFDPY…MWYKDLKMKM (94 aa). The 61-residue stretch at 28-88 folds into the v-SNARE coiled-coil homology domain; it reads RTAELQAEID…NRVRKAMWYK (61 aa). K63 participates in a covalent cross-link: Glycyl lysine isopeptide (Lys-Gly) (interchain with G-Cter in ubiquitin). C95 carries S-palmitoyl cysteine lipidation. Residues 95–111 form a helical; Anchor for type IV membrane protein membrane-spanning segment; that stretch reads CLALVIIILLVVIIVPI. Topologically, residues 112–117 are vesicular; it reads AVHFSR.

The protein belongs to the synaptobrevin family. Post-translationally, palmitoylated by SWF1.

Its subcellular location is the endomembrane system. Its function is as follows. SNC1 and SNC2 are vesicle-targeting proteins essential for normal secretory traffic between the Golgi and the plasma membrane. They may also be involved in vesicle fusion. This is Synaptobrevin homolog 1 (SNC1) from Saccharomyces cerevisiae (strain ATCC 204508 / S288c) (Baker's yeast).